The sequence spans 768 residues: Ral guanine nucleotide dissociation stimulator-like 1 (768 aa).

The N-terminal Ras-GEF domain occupies 65–196 (KIRTIKAGTL…RAQNLLEQFQ (132 aa)). One can recognise a Ras-GEF domain in the interval 232–501 (SEDLVAEQLT…YALSCEIEAA (270 aa)). Ser520 carries the post-translational modification Phosphoserine. Positions 530-623 (PGSTPTKEQP…PPTCNNNPKI (94 aa)) are disordered. 2 stretches are compositionally biased toward low complexity: residues 541-561 (SAASGSSGESMDSVSVSSCES) and 586-596 (ESSSSCSSIHS). A compositionally biased stretch (polar residues) spans 597-621 (MDTNSSGMSSLINPLSSPPTCNNNP). The Ras-associating domain maps to 648-735 (DTCIIRISVE…FDFILRKKNS (88 aa)).

As to quaternary structure, interacts with Ras.

In terms of biological role, probable guanine nucleotide exchange factor. This Mus musculus (Mouse) protein is Ral guanine nucleotide dissociation stimulator-like 1 (Rgl1).